The primary structure comprises 189 residues: Translation initiation factor IF-3 (189 aa).

Belongs to the IF-3 family. As to quaternary structure, monomer.

The protein localises to the cytoplasm. IF-3 binds to the 30S ribosomal subunit and shifts the equilibrium between 70S ribosomes and their 50S and 30S subunits in favor of the free subunits, thus enhancing the availability of 30S subunits on which protein synthesis initiation begins. In Corynebacterium glutamicum (strain ATCC 13032 / DSM 20300 / JCM 1318 / BCRC 11384 / CCUG 27702 / LMG 3730 / NBRC 12168 / NCIMB 10025 / NRRL B-2784 / 534), this protein is Translation initiation factor IF-3.